The chain runs to 233 residues: Superoxide dismutase [Mn], mitochondrial (233 aa).

The transit peptide at 1 to 27 directs the protein to the mitochondrion; the sequence is MALRSLVTRKNLPSAFKAATGLGQLRG. Mn(2+) is bound by residues His55, His103, Asp192, and His196.

Belongs to the iron/manganese superoxide dismutase family. As to quaternary structure, homotetramer. Requires Mn(2+) as cofactor. Present in all tissues examined (leaf, petiole, root, latex, callus) with young leaves showing the highest levels in intact plants.

The protein localises to the mitochondrion matrix. The catalysed reaction is 2 superoxide + 2 H(+) = H2O2 + O2. Its function is as follows. Destroys superoxide anion radicals which are normally produced within the cells and which are toxic to biological systems. The chain is Superoxide dismutase [Mn], mitochondrial (SODA) from Hevea brasiliensis (Para rubber tree).